The chain runs to 51 residues: MRDKIKLVSSAGTGFYYTTDKNKRNMPGKMEIKKFDPKVRQHVLFKEAKIK.

It belongs to the bacterial ribosomal protein bL33 family.

The sequence is that of Large ribosomal subunit protein bL33 from Pseudoalteromonas atlantica (strain T6c / ATCC BAA-1087).